A 299-amino-acid chain; its full sequence is Oxygen-dependent coproporphyrinogen-III oxidase (299 aa).

Position 92 (serine 92) interacts with substrate. Residues histidine 96 and histidine 106 each contribute to the a divalent metal cation site. The active-site Proton donor is the histidine 106. 108–110 (NVR) contributes to the substrate binding site. Positions 145 and 175 each coordinate a divalent metal cation. The important for dimerization stretch occupies residues 240 to 275 (YVEFNLVWDRGTLFGLQTGGRTESILMSMPPLVRWE). 258 to 260 (GGR) lines the substrate pocket.

Belongs to the aerobic coproporphyrinogen-III oxidase family. In terms of assembly, homodimer. A divalent metal cation is required as a cofactor.

It localises to the cytoplasm. The enzyme catalyses coproporphyrinogen III + O2 + 2 H(+) = protoporphyrinogen IX + 2 CO2 + 2 H2O. It participates in porphyrin-containing compound metabolism; protoporphyrin-IX biosynthesis; protoporphyrinogen-IX from coproporphyrinogen-III (O2 route): step 1/1. In terms of biological role, involved in the heme biosynthesis. Catalyzes the aerobic oxidative decarboxylation of propionate groups of rings A and B of coproporphyrinogen-III to yield the vinyl groups in protoporphyrinogen-IX. This is Oxygen-dependent coproporphyrinogen-III oxidase from Klebsiella pneumoniae (strain 342).